A 564-amino-acid polypeptide reads, in one-letter code: 4-hydroxy-7-methoxy-3-oxo-3,4-dihydro-2H-1,4-benzoxazin-2-yl glucoside beta-D-glucosidase 1d, chloroplastic (564 aa).

Residues 1–50 (MALLAAATLNPTTHLSLRSRAGRNSENLWLRSAASSQKSKGRFCNLTVRA) constitute a chloroplast transit peptide. A beta-D-glucoside contacts are provided by residues glutamine 92, histidine 194, and 239–240 (NE). The active-site Proton donor is glutamate 240. Cysteine 259 and cysteine 265 are oxidised to a cystine. A beta-D-glucoside contacts are provided by residues tyrosine 383, glutamate 456, tryptophan 504, 511-512 (EW), and phenylalanine 520. Glutamate 456 serves as the catalytic Nucleophile.

This sequence belongs to the glycosyl hydrolase 1 family. As to quaternary structure, homo- and heterohexamers. In terms of tissue distribution, expressed in young seedlings early after germination.

It is found in the plastid. The protein resides in the chloroplast. It carries out the reaction Hydrolysis of terminal, non-reducing beta-D-glucosyl residues with release of beta-D-glucose.. It catalyses the reaction DIMBOA beta-D-glucoside + H2O = DIMBOA + D-glucose. The catalysed reaction is DIBOA beta-D-glucoside + H2O = DIBOA + D-glucose. In terms of biological role, acts in defense of young plant parts against pests via the production of hydroxamic acids from hydroxamic acid glucosides. Enzymatic activity is highly correlated with plant growth. The preferred substrate is DIMBOA-beta-D-glucoside. In Triticum aestivum (Wheat), this protein is 4-hydroxy-7-methoxy-3-oxo-3,4-dihydro-2H-1,4-benzoxazin-2-yl glucoside beta-D-glucosidase 1d, chloroplastic (GLU1D).